The chain runs to 236 residues: MTATFNCFVTGTDTEIGKTMISTALLHALVQQGVKAAAIKSVAAGATAIQTNEGEVWHNDDADALAQAANVVLPRELATPYLLHEACAPHVSAELQGVAIDIAHIKNCYVQVREMAEAVVVEGVGGFRVPLSDHADTADLARELALPVIMVVGLRLGCLNHALLTADAIAARGLKLVGWVANTVDAGMPFAEDNVAALAARLSAPLLGCVPRLAAPLPAAAAAYLDFSCLPNWPKA.

T19 is a Mg(2+) binding site. The active site involves K40. Mg(2+) is bound by residues D61 and E122. ATP is bound by residues D61, 122 to 125 (EGVG), 182 to 183 (NT), and 211 to 213 (PRL).

Belongs to the dethiobiotin synthetase family. In terms of assembly, homodimer. Mg(2+) is required as a cofactor.

It is found in the cytoplasm. It carries out the reaction (7R,8S)-7,8-diammoniononanoate + CO2 + ATP = (4R,5S)-dethiobiotin + ADP + phosphate + 3 H(+). Its pathway is cofactor biosynthesis; biotin biosynthesis; biotin from 7,8-diaminononanoate: step 1/2. Its function is as follows. Catalyzes a mechanistically unusual reaction, the ATP-dependent insertion of CO2 between the N7 and N8 nitrogen atoms of 7,8-diaminopelargonic acid (DAPA, also called 7,8-diammoniononanoate) to form a ureido ring. This is ATP-dependent dethiobiotin synthetase BioD from Janthinobacterium sp. (strain Marseille) (Minibacterium massiliensis).